A 58-amino-acid chain; its full sequence is Small ribosomal subunit protein bS21 (58 aa).

A disordered region spans residues 34-58 (KREHYESPSVRRKKKSEAARRRKRR). Positions 43 to 58 (VRRKKKSEAARRRKRR) are enriched in basic residues.

The protein belongs to the bacterial ribosomal protein bS21 family.

This chain is Small ribosomal subunit protein bS21, found in Caldicellulosiruptor bescii (strain ATCC BAA-1888 / DSM 6725 / KCTC 15123 / Z-1320) (Anaerocellum thermophilum).